Reading from the N-terminus, the 168-residue chain is ATP synthase F(1) complex subunit delta, mitochondrial (168 aa).

The N-terminal 22 residues, 1-22 (MLPAALLRHPGLRRLVLQARTY), are a transit peptide targeting the mitochondrion. Residues Lys136 and Lys165 each carry the N6-acetyllysine; alternate modification. 2 positions are modified to N6-succinyllysine; alternate: Lys136 and Lys165.

Belongs to the ATPase epsilon chain family. In terms of assembly, component of the ATP synthase complex composed at least of ATP5F1A/subunit alpha, ATP5F1B/subunit beta, ATP5MC1/subunit c (homooctomer), MT-ATP6/subunit a, MT-ATP8/subunit 8, ATP5ME/subunit e, ATP5MF/subunit f, ATP5MG/subunit g, ATP5MK/subunit k, ATP5MJ/subunit j, ATP5F1C/subunit gamma, ATP5F1D/subunit delta, ATP5F1E/subunit epsilon, ATP5PF/subunit F6, ATP5PB/subunit b, ATP5PD/subunit d, ATP5PO/subunit OSCP. ATP synthase complex consists of a soluble F(1) head domain (subunits alpha(3) and beta(3)) - the catalytic core - and a membrane F(0) domain - the membrane proton channel (subunits c, a, 8, e, f, g, k and j). These two domains are linked by a central stalk (subunits gamma, delta, and epsilon) rotating inside the F1 region and a stationary peripheral stalk (subunits F6, b, d, and OSCP). Component of a complex composed at least by ATPIF1, ATP5F1A, ATP5F1B, ATP5F1C AND ATP5F1E.

The protein localises to the mitochondrion. The protein resides in the mitochondrion inner membrane. Subunit delta, of the mitochondrial membrane ATP synthase complex (F(1)F(0) ATP synthase or Complex V) that produces ATP from ADP in the presence of a proton gradient across the membrane which is generated by electron transport complexes of the respiratory chain. ATP synthase complex consist of a soluble F(1) head domain - the catalytic core - and a membrane F(1) domain - the membrane proton channel. These two domains are linked by a central stalk rotating inside the F(1) region and a stationary peripheral stalk. During catalysis, ATP synthesis in the catalytic domain of F(1) is coupled via a rotary mechanism of the central stalk subunits to proton translocation. In vivo, can only synthesize ATP although its ATP hydrolase activity can be activated artificially in vitro. With the central stalk subunit gamma, is essential for the biogenesis of F(1) catalytic part of the ATP synthase complex namely in the formation of F1 assembly intermediate. The protein is ATP synthase F(1) complex subunit delta, mitochondrial of Rattus norvegicus (Rat).